The sequence spans 426 residues: Mediator of RNA polymerase II transcription subunit 1 (426 aa).

Residues 324 to 356 (VGDAPAPAAQPPLHRRRSSNKGCRRASAAESAT) form a disordered region. Over residues 336–347 (LHRRRSSNKGCR) the composition is skewed to basic residues.

This sequence belongs to the Mediator complex subunit 1 family. In terms of assembly, component of the Mediator complex.

Its subcellular location is the nucleus. Component of the Mediator complex, a coactivator involved in the regulated transcription of nearly all RNA polymerase II-dependent genes. Mediator functions as a bridge to convey information from gene-specific regulatory proteins to the basal RNA polymerase II transcription machinery. Mediator is recruited to promoters by direct interactions with regulatory proteins and serves as a scaffold for the assembly of a functional preinitiation complex with RNA polymerase II and the general transcription factors. The chain is Mediator of RNA polymerase II transcription subunit 1 (MED1) from Eremothecium gossypii (strain ATCC 10895 / CBS 109.51 / FGSC 9923 / NRRL Y-1056) (Yeast).